A 147-amino-acid chain; its full sequence is Prefoldin subunit alpha 2 (147 aa).

This sequence belongs to the prefoldin subunit alpha family. In terms of assembly, heterohexamer of two alpha and four beta subunits.

It is found in the cytoplasm. Its function is as follows. Molecular chaperone capable of stabilizing a range of proteins. Seems to fulfill an ATP-independent, HSP70-like function in archaeal de novo protein folding. This Methanocaldococcus jannaschii (strain ATCC 43067 / DSM 2661 / JAL-1 / JCM 10045 / NBRC 100440) (Methanococcus jannaschii) protein is Prefoldin subunit alpha 2 (pfdA2).